The primary structure comprises 410 residues: Lysosome-associated membrane glycoprotein 2 (410 aa).

The first 28 residues, 1-28, serve as a signal peptide directing secretion; that stretch reads MMCFRLSPVSGSGLVLSCLLLGAVQSYA. A first lumenal domain region spans residues 29 to 192; sequence FELNLPDSKA…SKEEFVCEED (164 aa). The Lumenal portion of the chain corresponds to 29-375; it reads FELNLPDSKA…QDCSADEDNF (347 aa). A disulfide bridge links Cys40 with Cys79. N-linked (GlcNAc...) asparagine glycans are attached at residues Asn48, Asn58, Asn71, Asn75, Asn99, Asn119, Asn123, Asn179, Asn222, Asn229, Asn242, Asn260, Asn275, Asn300, Asn307, Asn317, and Asn356. A disulfide bridge connects residues Cys153 and Cys189. Positions 193–228 are hinge; it reads KSVTTVRPIIHTTVPPPTTTPTPLPPKVGNYSVSNG. The second lumenal domain stretch occupies residues 229-375; that stretch reads NATCLLATMG…QDCSADEDNF (147 aa). Cysteines 232 and 265 form a disulfide. Cysteines 331 and 368 form a disulfide. Residues 376-399 traverse the membrane as a helical segment; it reads LVPIAVGAALAGVLALVLLAYFIG. The Cytoplasmic portion of the chain corresponds to 400–410; sequence LKRHHTGYEQF. An important for binding and subsequent lysosomal degradation of target proteins region spans residues 401–404; that stretch reads KRHH.

The protein belongs to the LAMP family. In terms of assembly, monomer. Forms large homooligomers. Interacts (via its cytoplasmic region) with HSPA8; HSPA8 mediates recruitment of proteins with a KFERQ motif to the surface of the lysosome for chaperone-mediated autophagy. Interacts with HSP90 in the lysosome lumen; this enhances LAMP2 stability. Interacts with MLLT11. Interacts with ABCB9. Interacts with FURIN. Interacts with CT55; this interaction may be important for LAMP2 protein stability. Interacts with TMEM175; inhibiting the proton channel activity of TMEM175. Forms a ternary complex with RAB7A and RUFY4 (via RUN domain); the interaction with RAB7A is mediated by RUFY4 (via RUN and coiled coil domains). Post-translationally, extensively N-glycosylated. Contains a minor proportion of O-linked glycans.

It localises to the lysosome membrane. The protein resides in the endosome membrane. Its subcellular location is the cell membrane. The protein localises to the cytoplasmic vesicle. It is found in the autophagosome membrane. In terms of biological role, lysosomal membrane glycoprotein which plays an important role in lysosome biogenesis, lysosomal pH regulation and autophagy. Acts as an important regulator of lysosomal lumen pH regulation by acting as a direct inhibitor of the proton channel TMEM175, facilitating lysosomal acidification for optimal hydrolase activity. Plays an important role in chaperone-mediated autophagy, a process that mediates lysosomal degradation of proteins in response to various stresses and as part of the normal turnover of proteins with a long biological half-live. Functions by binding target proteins, such as GAPDH, NLRP3 and MLLT11, and targeting them for lysosomal degradation. In the chaperone-mediated autophagy, acts downstream of chaperones, such as HSPA8/HSC70, which recognize and bind substrate proteins and mediate their recruitment to lysosomes, where target proteins bind LAMP2. Plays a role in lysosomal protein degradation in response to starvation. Required for the fusion of autophagosomes with lysosomes during autophagy. Cells that lack LAMP2 express normal levels of VAMP8, but fail to accumulate STX17 on autophagosomes, which is the most likely explanation for the lack of fusion between autophagosomes and lysosomes. Required for normal degradation of the contents of autophagosomes. Required for efficient MHC class II-mediated presentation of exogenous antigens via its function in lysosomal protein degradation; antigenic peptides generated by proteases in the endosomal/lysosomal compartment are captured by nascent MHC II subunits. Is not required for efficient MHC class II-mediated presentation of endogenous antigens. This is Lysosome-associated membrane glycoprotein 2 (LAMP2) from Cricetulus griseus (Chinese hamster).